Here is a 277-residue protein sequence, read N- to C-terminus: Thymidylate synthase (277 aa).

Arg-21 provides a ligand contact to dUMP. (6R)-5,10-methylene-5,6,7,8-tetrahydrofolate is bound at residue His-51. Position 126-127 (Arg-126–Arg-127) interacts with dUMP. Cys-159 (nucleophile) is an active-site residue. DUMP-binding positions include Arg-179 to Asp-182, Asn-190, and His-220 to Tyr-222. (6R)-5,10-methylene-5,6,7,8-tetrahydrofolate is bound at residue Asp-182. Ala-276 serves as a coordination point for (6R)-5,10-methylene-5,6,7,8-tetrahydrofolate.

This sequence belongs to the thymidylate synthase family. Bacterial-type ThyA subfamily. In terms of assembly, homodimer.

It is found in the cytoplasm. It catalyses the reaction dUMP + (6R)-5,10-methylene-5,6,7,8-tetrahydrofolate = 7,8-dihydrofolate + dTMP. The protein operates within pyrimidine metabolism; dTTP biosynthesis. In terms of biological role, catalyzes the reductive methylation of 2'-deoxyuridine-5'-monophosphate (dUMP) to 2'-deoxythymidine-5'-monophosphate (dTMP) while utilizing 5,10-methylenetetrahydrofolate (mTHF) as the methyl donor and reductant in the reaction, yielding dihydrofolate (DHF) as a by-product. This enzymatic reaction provides an intracellular de novo source of dTMP, an essential precursor for DNA biosynthesis. The chain is Thymidylate synthase from Thioalkalivibrio sulfidiphilus (strain HL-EbGR7).